The chain runs to 107 residues: Large ribosomal subunit protein uL18c (107 aa).

This sequence belongs to the universal ribosomal protein uL18 family. In terms of assembly, part of the 50S ribosomal subunit; contacts the 5S rRNA.

Its subcellular location is the plastid. It is found in the chloroplast. Its function is as follows. Binds 5S rRNA, forms part of the central protuberance of the 50S subunit. The sequence is that of Large ribosomal subunit protein uL18c (rpl18) from Guillardia theta (Cryptophyte).